Reading from the N-terminus, the 142-residue chain is 3-hydroxyacyl-[acyl-carrier-protein] dehydratase FabZ (142 aa).

His48 is a catalytic residue.

It belongs to the thioester dehydratase family. FabZ subfamily.

It is found in the cytoplasm. The enzyme catalyses a (3R)-hydroxyacyl-[ACP] = a (2E)-enoyl-[ACP] + H2O. Its function is as follows. Involved in unsaturated fatty acids biosynthesis. Catalyzes the dehydration of short chain beta-hydroxyacyl-ACPs and long chain saturated and unsaturated beta-hydroxyacyl-ACPs. In Natranaerobius thermophilus (strain ATCC BAA-1301 / DSM 18059 / JW/NM-WN-LF), this protein is 3-hydroxyacyl-[acyl-carrier-protein] dehydratase FabZ.